We begin with the raw amino-acid sequence, 280 residues long: Acetyl-coenzyme A carboxylase carboxyl transferase subunit beta (280 aa).

Residues 26–280 (LWQKCPRCGE…TKLLAWHSQK (255 aa)) enclose the CoA carboxyltransferase N-terminal domain. Residues C30, C33, C49, and C52 each contribute to the Zn(2+) site. The C4-type zinc finger occupies 30 to 52 (CPRCGEIIFNKELEKNFKVCPKC).

It belongs to the AccD/PCCB family. As to quaternary structure, acetyl-CoA carboxylase is a heterohexamer composed of biotin carboxyl carrier protein (AccB), biotin carboxylase (AccC) and two subunits each of ACCase subunit alpha (AccA) and ACCase subunit beta (AccD). Zn(2+) is required as a cofactor.

The protein localises to the cytoplasm. It carries out the reaction N(6)-carboxybiotinyl-L-lysyl-[protein] + acetyl-CoA = N(6)-biotinyl-L-lysyl-[protein] + malonyl-CoA. It functions in the pathway lipid metabolism; malonyl-CoA biosynthesis; malonyl-CoA from acetyl-CoA: step 1/1. In terms of biological role, component of the acetyl coenzyme A carboxylase (ACC) complex. Biotin carboxylase (BC) catalyzes the carboxylation of biotin on its carrier protein (BCCP) and then the CO(2) group is transferred by the transcarboxylase to acetyl-CoA to form malonyl-CoA. This Carboxydothermus hydrogenoformans (strain ATCC BAA-161 / DSM 6008 / Z-2901) protein is Acetyl-coenzyme A carboxylase carboxyl transferase subunit beta.